Here is a 197-residue protein sequence, read N- to C-terminus: Phosphoheptose isomerase (197 aa).

The 161-residue stretch at 37 to 197 folds into the SIS domain; sequence MLQCLMNDGK…CIDSVLLEGM (161 aa). Residue 52–54 participates in substrate binding; sequence NGG. Residues His-61 and Glu-65 each coordinate Zn(2+). Residues Glu-65, 94–95, 120–122, Ser-125, and Gln-175 each bind substrate; these read ND and STS. Gln-175 and His-183 together coordinate Zn(2+).

Belongs to the SIS family. GmhA subfamily. As to quaternary structure, homotetramer. The cofactor is Zn(2+).

It localises to the cytoplasm. It catalyses the reaction 2 D-sedoheptulose 7-phosphate = D-glycero-alpha-D-manno-heptose 7-phosphate + D-glycero-beta-D-manno-heptose 7-phosphate. The protein operates within carbohydrate biosynthesis; D-glycero-D-manno-heptose 7-phosphate biosynthesis; D-glycero-alpha-D-manno-heptose 7-phosphate and D-glycero-beta-D-manno-heptose 7-phosphate from sedoheptulose 7-phosphate: step 1/1. In terms of biological role, catalyzes the isomerization of sedoheptulose 7-phosphate in D-glycero-D-manno-heptose 7-phosphate. In Neisseria meningitidis serogroup C / serotype 2a (strain ATCC 700532 / DSM 15464 / FAM18), this protein is Phosphoheptose isomerase.